We begin with the raw amino-acid sequence, 165 residues long: Interferon gamma (165 aa).

The N-terminal stretch at 1–23 (MKYTSYILAFQLCIVLGSLGCYC) is a signal peptide. A Pyrrolidone carboxylic acid modification is found at glutamine 24. Asparagine 48 and asparagine 120 each carry an N-linked (GlcNAc...) asparagine glycan.

It belongs to the type II (or gamma) interferon family. Homodimer. Interacts with IFNGR1 (via extracellular domain); this interaction promotes IFNGR1 dimerization. In terms of tissue distribution, released primarily from activated T lymphocytes.

The protein resides in the secreted. Type II interferon produced by immune cells such as T-cells and NK cells that plays crucial roles in antimicrobial, antiviral, and antitumor responses by activating effector immune cells and enhancing antigen presentation. Primarily signals through the JAK-STAT pathway after interaction with its receptor IFNGR1 to affect gene regulation. Upon IFNG binding, IFNGR1 intracellular domain opens out to allow association of downstream signaling components JAK2, JAK1 and STAT1, leading to STAT1 activation, nuclear translocation and transcription of IFNG-regulated genes. Many of the induced genes are transcription factors such as IRF1 that are able to further drive regulation of a next wave of transcription. Plays a role in class I antigen presentation pathway by inducing a replacement of catalytic proteasome subunits with immunoproteasome subunits. In turn, increases the quantity, quality, and repertoire of peptides for class I MHC loading. Increases the efficiency of peptide generation also by inducing the expression of activator PA28 that associates with the proteasome and alters its proteolytic cleavage preference. Up-regulates as well MHC II complexes on the cell surface by promoting expression of several key molecules such as cathepsins B/CTSB, H/CTSH, and L/CTSL. Participates in the regulation of hematopoietic stem cells during development and under homeostatic conditions by affecting their development, quiescence, and differentiation. The polypeptide is Interferon gamma (IFNG) (Cercocebus atys (Sooty mangabey)).